We begin with the raw amino-acid sequence, 97 residues long: Small ribosomal subunit protein uS19 (97 aa).

The disordered stretch occupies residues 74–97 (FSPTRRFGGHPDKKAVKGKIEKQG). A compositionally biased stretch (basic and acidic residues) spans 82 to 97 (GHPDKKAVKGKIEKQG).

Belongs to the universal ribosomal protein uS19 family.

In terms of biological role, protein S19 forms a complex with S13 that binds strongly to the 16S ribosomal RNA. This is Small ribosomal subunit protein uS19 from Petrotoga mobilis (strain DSM 10674 / SJ95).